The following is a 177-amino-acid chain: Nicotinamide-nucleotide adenylyltransferase (177 aa).

The protein belongs to the archaeal NMN adenylyltransferase family.

Its subcellular location is the cytoplasm. It carries out the reaction beta-nicotinamide D-ribonucleotide + ATP + H(+) = diphosphate + NAD(+). Its pathway is cofactor biosynthesis; NAD(+) biosynthesis; NAD(+) from nicotinamide D-ribonucleotide: step 1/1. This Halobacterium salinarum (strain ATCC 29341 / DSM 671 / R1) protein is Nicotinamide-nucleotide adenylyltransferase.